Here is a 598-residue protein sequence, read N- to C-terminus: Nicotinamide riboside transporter 1 (598 aa).

Transmembrane regions (helical) follow at residues leucine 48–leucine 68, glycine 71–phenylalanine 91, phenylalanine 112–valine 132, leucine 174–histidine 194, tyrosine 197–leucine 217, alanine 241–asparagine 261, leucine 273–phenylalanine 293, glycine 372–serine 392, phenylalanine 395–cysteine 415, alanine 447–asparagine 467, and serine 484–phenylalanine 504. 2 positions are modified to phosphoserine: serine 560 and serine 572.

The protein belongs to the purine-cytosine permease (2.A.39) family.

It localises to the cell membrane. Its function is as follows. High-affinity pH-dependent nicotinamide riboside transporter which also transports thiamine with low affinity. Involved in 5-fluorocytosine sensitivity. This Saccharomyces cerevisiae (strain ATCC 204508 / S288c) (Baker's yeast) protein is Nicotinamide riboside transporter 1 (NRT1).